We begin with the raw amino-acid sequence, 247 residues long: Tyrosine recombinase XerD-like (247 aa).

Residues 1-72 (MIKHIEAFLA…TVNQFLHYLY (72 aa)) form the Core-binding (CB) domain. Residues 91–247 (STKVPFTYQL…PITLEKYYRL (157 aa)) form the Tyr recombinase domain. The active site involves R212. Y244 functions as the O-(3'-phospho-DNA)-tyrosine intermediate in the catalytic mechanism.

Belongs to the 'phage' integrase family. XerD-like subfamily.

Its subcellular location is the cytoplasm. Putative tyrosine recombinase. Not involved in the cutting and rejoining of the recombining DNA molecules on dif(SL) site. The chain is Tyrosine recombinase XerD-like from Streptococcus uberis (strain ATCC BAA-854 / 0140J).